A 180-amino-acid polypeptide reads, in one-letter code: Crossover junction endodeoxyribonuclease RuvC (180 aa).

Active-site residues include D13, E73, and D145. The Mg(2+) site is built by D13, E73, and D145.

Belongs to the RuvC family. As to quaternary structure, homodimer which binds Holliday junction (HJ) DNA. The HJ becomes 2-fold symmetrical on binding to RuvC with unstacked arms; it has a different conformation from HJ DNA in complex with RuvA. In the full resolvosome a probable DNA-RuvA(4)-RuvB(12)-RuvC(2) complex forms which resolves the HJ. Mg(2+) is required as a cofactor.

The protein resides in the cytoplasm. The enzyme catalyses Endonucleolytic cleavage at a junction such as a reciprocal single-stranded crossover between two homologous DNA duplexes (Holliday junction).. Its function is as follows. The RuvA-RuvB-RuvC complex processes Holliday junction (HJ) DNA during genetic recombination and DNA repair. Endonuclease that resolves HJ intermediates. Cleaves cruciform DNA by making single-stranded nicks across the HJ at symmetrical positions within the homologous arms, yielding a 5'-phosphate and a 3'-hydroxyl group; requires a central core of homology in the junction. The consensus cleavage sequence is 5'-(A/T)TT(C/G)-3'. Cleavage occurs on the 3'-side of the TT dinucleotide at the point of strand exchange. HJ branch migration catalyzed by RuvA-RuvB allows RuvC to scan DNA until it finds its consensus sequence, where it cleaves and resolves the cruciform DNA. The protein is Crossover junction endodeoxyribonuclease RuvC of Magnetococcus marinus (strain ATCC BAA-1437 / JCM 17883 / MC-1).